Consider the following 238-residue polypeptide: ATP synthase subunit a (238 aa).

Helical transmembrane passes span 17 to 37, 75 to 95, 112 to 132, 172 to 192, and 194 to 214; these read LSNI…AIIC, FHVL…LGLP, DPIV…YYGI, YGNI…LAHI, and IFVG…SLFI.

It belongs to the ATPase A chain family. As to quaternary structure, F-type ATPases have 2 components, CF(1) - the catalytic core - and CF(0) - the membrane proton channel. CF(1) has five subunits: alpha(3), beta(3), gamma(1), delta(1), epsilon(1). CF(0) has three main subunits: a(1), b(2) and c(9-12). The alpha and beta chains form an alternating ring which encloses part of the gamma chain. CF(1) is attached to CF(0) by a central stalk formed by the gamma and epsilon chains, while a peripheral stalk is formed by the delta and b chains.

The protein resides in the cell membrane. Functionally, key component of the proton channel; it plays a direct role in the translocation of protons across the membrane. The sequence is that of ATP synthase subunit a from Listeria monocytogenes serovar 1/2a (strain ATCC BAA-679 / EGD-e).